We begin with the raw amino-acid sequence, 954 residues long: Bifunctional endo-1,4-beta-xylanase XylA (954 aa).

Positions 1–27 form a signal peptide, or 28, or 29; that stretch reads MKLSKIKKVLSGTVSALMIASAAPVVA. One can recognise a GH11 domain in the interval 29–236; that stretch reads AADQQTRGNV…SNGSANVKSV (208 aa). Catalysis depends on glutamate 122, which acts as the Nucleophile. The Proton donor role is filled by glutamate 223. Over residues 233-243 the composition is skewed to polar residues; it reads VKSVSVTQGGS. Residues 233-628 form a disordered region; it reads VKSVSVTQGG…NNNNSAGSSD (396 aa). The segment covering 246-622 has biased composition (low complexity); that stretch reads NGGQQQNNDW…WNQGQQNNNN (377 aa). The GH10 domain maps to 624–952; it reads AGSSDSLKGA…KPAYDRVMAL (329 aa). Glutamate 774 (proton donor) is an active-site residue. The active-site Nucleophile is the glutamate 884.

In the N-terminal section; belongs to the glycosyl hydrolase 11 (cellulase G) family. It in the C-terminal section; belongs to the glycosyl hydrolase 10 (cellulase F) family.

The catalysed reaction is Endohydrolysis of (1-&gt;4)-beta-D-xylosidic linkages in xylans.. It participates in glycan degradation; xylan degradation. In terms of biological role, xylanase domain releases more xylo-oligosaccharides and GH10 domain more xylose. The sequence is that of Bifunctional endo-1,4-beta-xylanase XylA (xynA) from Ruminococcus flavefaciens.